The following is a 779-amino-acid chain: Coenzyme PQQ synthesis protein F (779 aa).

H57 serves as a coordination point for Zn(2+). Catalysis depends on E60, which acts as the Proton acceptor. Zn(2+) is bound by residues H61 and E138.

Belongs to the peptidase M16 family. Zn(2+) is required as a cofactor.

Its pathway is cofactor biosynthesis; pyrroloquinoline quinone biosynthesis. Functionally, required for coenzyme pyrroloquinoline quinone (PQQ) biosynthesis. It is thought that this protein is a protease that cleaves peptides bond in a small peptide (gene pqqA), providing the glutamate and tyrosine residues which are necessary for the synthesis of PQQ. The sequence is that of Coenzyme PQQ synthesis protein F (pqqF) from Pseudomonas syringae pv. tomato (strain ATCC BAA-871 / DC3000).